The sequence spans 876 residues: Alanine--tRNA ligase (876 aa).

His-565, His-569, Cys-667, and His-671 together coordinate Zn(2+).

This sequence belongs to the class-II aminoacyl-tRNA synthetase family. The cofactor is Zn(2+).

Its subcellular location is the cytoplasm. It carries out the reaction tRNA(Ala) + L-alanine + ATP = L-alanyl-tRNA(Ala) + AMP + diphosphate. Catalyzes the attachment of alanine to tRNA(Ala) in a two-step reaction: alanine is first activated by ATP to form Ala-AMP and then transferred to the acceptor end of tRNA(Ala). Also edits incorrectly charged Ser-tRNA(Ala) and Gly-tRNA(Ala) via its editing domain. The chain is Alanine--tRNA ligase from Staphylococcus aureus (strain USA300).